The primary structure comprises 146 residues: Putative pre-16S rRNA nuclease (146 aa).

This sequence belongs to the YqgF nuclease family.

It is found in the cytoplasm. Could be a nuclease involved in processing of the 5'-end of pre-16S rRNA. This chain is Putative pre-16S rRNA nuclease, found in Pseudomonas syringae pv. tomato (strain ATCC BAA-871 / DC3000).